An 812-amino-acid polypeptide reads, in one-letter code: Protein let-653 (812 aa).

The signal sequence occupies residues 1–21 (MRHPLISLLLLIAFYSTSSEA). Apple domains lie at 26–116 (CNSF…WKYC) and 123–209 (CSGE…ENNC). 6 disulfides stabilise this stretch: C26–C116, C53–C88, C57–C72, C123–C209, C154–C178, and C158–C166. N-linked (GlcNAc...) asparagine glycans are attached at residues N172, N211, and N272. The ZP domain occupies 221-725 (ECRDNGISVS…NTCDDVEGCD (505 aa)). Low complexity-rich tracts occupy residues 375–449 (QVTT…STTT) and 496–584 (PTTT…PASS). 2 disordered regions span residues 375 to 461 (QVTT…STIM) and 494 to 584 (DVPT…PASS). N771 carries an N-linked (GlcNAc...) asparagine glycan.

Post-translationally, cleaved at the C-terminal domain. In terms of tissue distribution, expressed in external cuticle-producing epithelial cells including the epidermis, vulva, rectum, excretory duct and excretory pore.

It localises to the apical cell membrane. The protein resides in the secreted. It is found in the extracellular space. Its function is as follows. Required for epithelial tube development and shaping. Involved in the morphogenesis and function of the three unicellular tubes of the excretory system, the canal cell, the duct cell and the pore cell. Also plays a role in cuticle development, alae formation and shaping of the vulval lumen. Required for larval development. This is Protein let-653 from Caenorhabditis elegans.